We begin with the raw amino-acid sequence, 138 residues long: Acidic phospholipase A2 2 (138 aa).

The first 16 residues, 1–16 (MRTLWIVAVWLTGVEG), serve as a signal peptide directing secretion. Cystine bridges form between Cys-42–Cys-131, Cys-44–Cys-60, Cys-59–Cys-111, Cys-65–Cys-138, Cys-66–Cys-104, Cys-73–Cys-97, and Cys-91–Cys-102. Tyr-43, Gly-45, and Gly-47 together coordinate Ca(2+). Residue His-63 is part of the active site. A Ca(2+)-binding site is contributed by Asp-64. The active site involves Asp-105.

In terms of assembly, monomer. Ca(2+) is required as a cofactor. In terms of tissue distribution, expressed by the venom gland.

It localises to the secreted. It carries out the reaction a 1,2-diacyl-sn-glycero-3-phosphocholine + H2O = a 1-acyl-sn-glycero-3-phosphocholine + a fatty acid + H(+). Snake venom phospholipase that inhibits ADP- and collagen-induced human platelet aggregation. This inhibition is completely inhibited by abolition of catalytic activity in case of collagen as inducer and partially inhibited in case of ADP as inducer. PLA2 catalyzes the calcium-dependent hydrolysis of the 2-acyl groups in 3-sn-phosphoglycerides. The chain is Acidic phospholipase A2 2 from Macrovipera lebetinus (Levantine viper).